We begin with the raw amino-acid sequence, 270 residues long: MSCFLEAEAATYSVGGATLVDRISLRIEGGELIAIVGPNGAGKSTLLRMLSGDLRPSRGAVRLQQRAVHSYAPRELASRRAMLSQHVSVSFPFTVDEIVQMGAGDRSRAATQSLVDAALHEVGLAEFRDRKLPTLSGGEQQRAHFARVLVQLGCGEAEHGPGLLLLDEPTSSLDLRHQLDLVSTAARCARNGTTVIAILHDLNLAARFADRIVVLHQGALAADGPPDQVIQNSLINRVFDIELAVRMADDGAPFILPQMVKSDDSANRMA.

One can recognise an ABC transporter domain in the interval 5–242 (LEAEAATYSV…SLINRVFDIE (238 aa)). 37 to 44 (GPNGAGKS) contributes to the ATP binding site.

Belongs to the ABC transporter superfamily. Heme (hemin) importer (TC 3.A.1.14.5) family. The complex is composed of two ATP-binding proteins (HmuV), two transmembrane proteins (HmuU) and a solute-binding protein (HmuT).

Its subcellular location is the cell inner membrane. In terms of biological role, part of the ABC transporter complex HmuTUV involved in hemin import. Responsible for energy coupling to the transport system. The protein is Hemin import ATP-binding protein HmuV of Rhodopseudomonas palustris (strain BisA53).